A 324-amino-acid polypeptide reads, in one-letter code: MTSPSTIKQRFLSKPNQLGVVAVGFNGGQCKLGVEAAPMALVEAGLLDQLRDDLDYEIHYDNTVHYYEKEIPAEDPDHRGMKKPRAVSAVTETLSSQVYEHSKEGKFTLTLGGDHSIAIGSISGIAKATRERLGREIGVIWVDAHADINIPEMSPSGNIHGMPMAFLTRLATEEKKDIFGWLQEEHKVNLRKLVYIGLRDVDRGEKKLLREHGIKAFSMHDVDRHGIGRVVEMALAHIGNDTPIHLSFDVDALDPQWAPSTGTPVRGGLTLREGDFICECVHETGNLISMDLVEVNPSLEAVGASDTIRTGCSLVRSALGDTLL.

4 residues coordinate Mn(2+): His-115, Asp-143, His-145, and Asp-147. Substrate-binding positions include His-145–Asn-149, Ser-156–Asn-158, and Asp-202. Positions 249 and 251 each coordinate Mn(2+). 2 residues coordinate substrate: Thr-263 and Glu-294.

It belongs to the arginase family. As to quaternary structure, homotrimer. Mn(2+) is required as a cofactor.

It carries out the reaction L-arginine + H2O = urea + L-ornithine. It participates in nitrogen metabolism; urea cycle; L-ornithine and urea from L-arginine: step 1/1. The protein is Arginase (agaA) of Emericella nidulans (strain FGSC A4 / ATCC 38163 / CBS 112.46 / NRRL 194 / M139) (Aspergillus nidulans).